Here is a 255-residue protein sequence, read N- to C-terminus: Electron transfer flavoprotein subunit beta (255 aa).

The residue at position 2 (Ala2) is an N-acetylalanine. Residues Ala9, 39-42, Cys66, and 123-134 contribute to the AMP site; these read NPFC and GKQAIDDDCNQT. The segment at 183–205 is recognition loop; it reads ADLRLNEPRYATLPNIMKAKKKK. Position 200 is an N6,N6,N6-trimethyllysine; by ETFBKMT; alternate (Lys200). An N6-acetyllysine; alternate modification is found at Lys200. Lys200 bears the N6-methyllysine; alternate mark. At Lys203 the chain carries N6,N6,N6-trimethyllysine; by ETFBKMT. At Lys210 the chain carries N6-acetyllysine; alternate. An N6-succinyllysine; alternate modification is found at Lys210. Ser223 and Ser226 each carry phosphoserine. Lys238 carries the post-translational modification N6-acetyllysine. An N6-acetyllysine; alternate modification is found at Lys248. The residue at position 248 (Lys248) is an N6-succinyllysine; alternate.

The protein belongs to the ETF beta-subunit/FixA family. Heterodimer composed of ETFA and ETFB. Identified in a complex that contains ETFA, ETFB and ETFRF1. Interacts with ACADM. Post-translationally, methylated. Trimethylation at Lys-200 and Lys-203 may negatively regulate the activity in electron transfer from acyl-CoA dehydrogenases.

The protein resides in the mitochondrion matrix. In terms of biological role, heterodimeric electron transfer flavoprotein that accepts electrons from several mitochondrial dehydrogenases, including acyl-CoA dehydrogenases, glutaryl-CoA and sarcosine dehydrogenase. It transfers the electrons to the main mitochondrial respiratory chain via ETF-ubiquinone oxidoreductase. Required for normal mitochondrial fatty acid oxidation and normal amino acid metabolism. ETFB binds an AMP molecule that probably has a purely structural role. In Pongo abelii (Sumatran orangutan), this protein is Electron transfer flavoprotein subunit beta.